The chain runs to 525 residues: Matrix extracellular phosphoglycoprotein (525 aa).

A signal peptide spans 1-17; that stretch reads MRVFCVGLLLFSVTWAA. Disordered stretches follow at residues 24–95, 187–216, and 237–525; these read TEKT…NRQR, AKAH…THRI, and EGSG…SDGD. 2 stretches are compositionally biased toward basic and acidic residues: residues 25-46 and 64-73; these read EKTK…DNIG and IVQERKKDLS. Composition is skewed to polar residues over residues 75 to 95 and 200 to 210; these read SEAS…NRQR and DSQAQKSPVKS. Positions 242 to 264 are dentonin; that stretch reads TDLQERGDNDISPFSGDGQPFKD. The Cell attachment site motif lies at 247–249; it reads RGD. An O-linked (Xyl...) (chondroitin sulfate) serine glycan is attached at Ser-256. Basic and acidic residues-rich tracts occupy residues 292–312 and 319–328; these read ESTH…REEN and TRDETAKEAD. 2 N-linked (GlcNAc...) asparagine glycosylation sites follow: Asn-477 and Asn-478. Positions 507 to 525 are ASARM motif; interaction with PHEX; that stretch reads RDDSSESSDSGSSSESDGD. Positions 513–525 are enriched in low complexity; sequence SSDSGSSSESDGD.

It belongs to the PF07175/osteoregulin family. As to quaternary structure, interacts (via the ASARM motif) with PHEX; the interaction is zinc-dependent. Post-translationally, phosphorylated on serine residues in the ASARM motif (in vitro) by FAM20C; the phosphorylation is important for the inhibition of bone mineralization. Cleaved by CTSB/cathepsin B; the cleavage is blocked by metalloprotease PHEX. In terms of tissue distribution, detected in urine (at protein level). Expressed by osteoblasts. Expressed by stem cells in dental pulp. Expressed by mesenchymal cells in dental papilla and dental pulp. Expressed in teeth, specifically in decidious dentin. Expressed in ondotoblasts. Expressed in salivary glands. Secreted from oncogenic hypophosphatemic tumors.

Its subcellular location is the secreted. The protein localises to the extracellular space. It is found in the extracellular matrix. Functionally, promotes renal phosphate excretion and inhibits intestinal phosphate absorption. Promotes bone mineralization by osteoblasts and cartilage mineralization by chondrocytes. Regulates the mineralization of the extracellular matrix of the craniofacial complex, such as teeth, bone and cartilage. Promotes dental pulp stem cell proliferation and differentiation. The chain is Matrix extracellular phosphoglycoprotein (MEPE) from Homo sapiens (Human).